Here is a 399-residue protein sequence, read N- to C-terminus: [Pyruvate dehydrogenase (acetyl-transferring)] kinase, mitochondrial (399 aa).

The transit peptide at 1 to 18 (MFLTRRLLGPFTSAIARK) directs the protein to the mitochondrion. One can recognise a Histidine kinase domain in the interval 123 to 360 (VVETMAEGLI…DAMIFLKAIP (238 aa)). Residues 247 to 254 (ELFKNSMR), Asp286, 305 to 306 (ST), and 321 to 326 (GYGYGL) contribute to the ATP site.

This sequence belongs to the PDK/BCKDK protein kinase family.

It localises to the mitochondrion matrix. It catalyses the reaction L-seryl-[pyruvate dehydrogenase E1 alpha subunit] + ATP = O-phospho-L-seryl-[pyruvate dehydrogenase E1 alpha subunit] + ADP + H(+). Inhibits the mitochondrial pyruvate dehydrogenase complex by phosphorylation of the E1 alpha subunit, thus contributing to the regulation of glucose metabolism. This chain is [Pyruvate dehydrogenase (acetyl-transferring)] kinase, mitochondrial, found in Ascaris suum (Pig roundworm).